Reading from the N-terminus, the 61-residue chain is MLNILSFIGICLNSFLYSSSFFVAKLPEAYAFLNPIVDVMPVIPLFFFLLAFVWQAAVSFR.

Residues 1–24 (MLNILSFIGICLNSFLYSSSFFVA) constitute a propeptide that is removed on maturation. The helical transmembrane segment at 40–60 (MPVIPLFFFLLAFVWQAAVSF) threads the bilayer.

Belongs to the PsbK family. In terms of assembly, PSII is composed of 1 copy each of membrane proteins PsbA, PsbB, PsbC, PsbD, PsbE, PsbF, PsbH, PsbI, PsbJ, PsbK, PsbL, PsbM, PsbT, PsbX, PsbY, PsbZ, Psb30/Ycf12, at least 3 peripheral proteins of the oxygen-evolving complex and a large number of cofactors. It forms dimeric complexes.

Its subcellular location is the plastid. The protein resides in the chloroplast thylakoid membrane. One of the components of the core complex of photosystem II (PSII). PSII is a light-driven water:plastoquinone oxidoreductase that uses light energy to abstract electrons from H(2)O, generating O(2) and a proton gradient subsequently used for ATP formation. It consists of a core antenna complex that captures photons, and an electron transfer chain that converts photonic excitation into a charge separation. The sequence is that of Photosystem II reaction center protein K from Cucumis sativus (Cucumber).